Reading from the N-terminus, the 172-residue chain is Small ribosomal subunit protein uS5c (172 aa).

The S5 DRBM domain maps to 15–78 (WEEKVVQVKR…TDAKKHIINV (64 aa)).

This sequence belongs to the universal ribosomal protein uS5 family. In terms of assembly, part of the 30S ribosomal subunit. Contacts protein S4.

The protein resides in the plastid. The protein localises to the chloroplast. With S4 and S12 plays an important role in translational accuracy. This chain is Small ribosomal subunit protein uS5c (rps5), found in Gracilaria tenuistipitata var. liui (Red alga).